The chain runs to 467 residues: Probable Xaa-Pro aminopeptidase pepP (467 aa).

The Mn(2+) site is built by aspartate 264, aspartate 275, glutamate 398, and glutamate 438.

The protein belongs to the peptidase M24B family. Mn(2+) is required as a cofactor.

It carries out the reaction Release of any N-terminal amino acid, including proline, that is linked to proline, even from a dipeptide or tripeptide.. Its function is as follows. Catalyzes the removal of a penultimate prolyl residue from the N-termini of peptides. In Neosartorya fischeri (strain ATCC 1020 / DSM 3700 / CBS 544.65 / FGSC A1164 / JCM 1740 / NRRL 181 / WB 181) (Aspergillus fischerianus), this protein is Probable Xaa-Pro aminopeptidase pepP (pepP).